A 668-amino-acid polypeptide reads, in one-letter code: S-adenosyl-L-methionine-dependent tRNA 4-demethylwyosine synthase TYW1B (668 aa).

The Flavodoxin-like domain occupies 37-191 (CVQIVIEMQG…NFRAWKTKFI (155 aa)). FMN-binding positions include 43–47 (EMQGF) and 130–162 (VFGLGNSAYASHFNKVGKNVDKWLWMLGVHRVM). A disordered region spans residues 202-269 (RKKSCGGHCK…QSLNSIVDVE (68 aa)). Basic and acidic residues-rich tracts occupy residues 213-223 (GKCESHQHGSE) and 233-243 (DELHHRDTKEE). Over residues 244–255 (EPFESSSEEEFG) the composition is skewed to acidic residues. A Radical SAM core domain is found at 336-580 (LWNESHRCME…VDLIPEYEIA (245 aa)). [4Fe-4S] cluster contacts are provided by Cys-352, Cys-356, and Cys-359.

It belongs to the TYW1 family. Requires [4Fe-4S] cluster as cofactor.

It catalyses the reaction N(1)-methylguanosine(37) in tRNA(Phe) + pyruvate + S-adenosyl-L-methionine = 4-demethylwyosine(37) in tRNA(Phe) + 5'-deoxyadenosine + L-methionine + CO2 + H2O. Its pathway is tRNA modification; wybutosine-tRNA(Phe) biosynthesis. Functionally, probable component of the wybutosine biosynthesis pathway. Wybutosine is a hyper modified guanosine with a tricyclic base found at the 3'-position adjacent to the anticodon of eukaryotic phenylalanine tRNA. Catalyzes the condensation of N-methylguanine with 2 carbon atoms from pyruvate to form the tricyclic 4-demethylwyosine, an intermediate in wybutosine biosynthesis. The sequence is that of S-adenosyl-L-methionine-dependent tRNA 4-demethylwyosine synthase TYW1B (TYW1B) from Homo sapiens (Human).